A 195-amino-acid polypeptide reads, in one-letter code: Peroxiredoxin (195 aa).

Positions alanine 4 to phenylalanine 162 constitute a Thioredoxin domain. Residue cysteine 49 is the Cysteine sulfenic acid (-SOH) intermediate of the active site.

This sequence belongs to the peroxiredoxin family. AhpC/Prx1 subfamily. As to quaternary structure, homodimer; disulfide-linked, upon oxidation.

The enzyme catalyses a hydroperoxide + [thioredoxin]-dithiol = an alcohol + [thioredoxin]-disulfide + H2O. Thiol-specific peroxidase that catalyzes the reduction of hydrogen peroxide and organic hydroperoxides to water and alcohols, respectively. Plays a role in cell protection against oxidative stress by detoxifying peroxides and as sensor of hydrogen peroxide-mediated signaling events. The protein is Peroxiredoxin of Ascaris suum (Pig roundworm).